The primary structure comprises 125 residues: Small ribosomal subunit protein uS12 (125 aa).

A 3-methylthioaspartic acid modification is found at Asp-89.

Belongs to the universal ribosomal protein uS12 family. Part of the 30S ribosomal subunit. Contacts proteins S8 and S17. May interact with IF1 in the 30S initiation complex.

With S4 and S5 plays an important role in translational accuracy. Functionally, interacts with and stabilizes bases of the 16S rRNA that are involved in tRNA selection in the A site and with the mRNA backbone. Located at the interface of the 30S and 50S subunits, it traverses the body of the 30S subunit contacting proteins on the other side and probably holding the rRNA structure together. The combined cluster of proteins S8, S12 and S17 appears to hold together the shoulder and platform of the 30S subunit. The chain is Small ribosomal subunit protein uS12 from Cupriavidus necator (strain ATCC 17699 / DSM 428 / KCTC 22496 / NCIMB 10442 / H16 / Stanier 337) (Ralstonia eutropha).